Consider the following 560-residue polypeptide: 2-succinyl-5-enolpyruvyl-6-hydroxy-3-cyclohexene-1-carboxylate synthase (560 aa).

The protein belongs to the TPP enzyme family. MenD subfamily. Homodimer. Requires Mg(2+) as cofactor. The cofactor is Mn(2+). It depends on thiamine diphosphate as a cofactor.

It carries out the reaction isochorismate + 2-oxoglutarate + H(+) = 5-enolpyruvoyl-6-hydroxy-2-succinyl-cyclohex-3-ene-1-carboxylate + CO2. Its pathway is quinol/quinone metabolism; 1,4-dihydroxy-2-naphthoate biosynthesis; 1,4-dihydroxy-2-naphthoate from chorismate: step 2/7. The protein operates within quinol/quinone metabolism; menaquinone biosynthesis. Catalyzes the thiamine diphosphate-dependent decarboxylation of 2-oxoglutarate and the subsequent addition of the resulting succinic semialdehyde-thiamine pyrophosphate anion to isochorismate to yield 2-succinyl-5-enolpyruvyl-6-hydroxy-3-cyclohexene-1-carboxylate (SEPHCHC). The chain is 2-succinyl-5-enolpyruvyl-6-hydroxy-3-cyclohexene-1-carboxylate synthase from Pectobacterium atrosepticum (strain SCRI 1043 / ATCC BAA-672) (Erwinia carotovora subsp. atroseptica).